We begin with the raw amino-acid sequence, 484 residues long: MKILFVASEVTPFAKSGGLADVTGALPKSLKKQGHDVRIILPFYSEVERGGYGIRKGRKSVDVMIGGSVKRGLFRHTNLEDIPVYLLENKEYFSRDHLYGTASGEYPDNHLRFAFFCRGVLDLLKKMDYRPDIIHCHDWQTAMIPLILKKEKGDDLFFSKTGTVFTIHNLAYQGLFPKEAMVDMGLDPSLFTIDCLEYYGKVNLIKGAILTADVINTVSETYCREILTPESGDGLDGVLTLRKNDLYGVLNGIDYEHWNPATDRGISKNFTPGAPAGKAANKKALQKRLGLEIAEDIPLVGMVSRLTEQKGLDLLEALLPRIAKAKLQLVLLGTGDEKYLKLLQEFAALGTDNVSVNIGFHPELAPQIYAGSDIFLMPSRYEPCGLGQMIALRYGAVPVVRKTGGLADTIFDERDQPKEPNGFSFDEYTPEALWEALSRAVEAYSDKAAWKKMMKRGMAGDFSWNTSALKYEELYRLVLAKKGR.

Lysine 15 is a binding site for ADP-alpha-D-glucose.

It belongs to the glycosyltransferase 1 family. Bacterial/plant glycogen synthase subfamily.

The enzyme catalyses [(1-&gt;4)-alpha-D-glucosyl](n) + ADP-alpha-D-glucose = [(1-&gt;4)-alpha-D-glucosyl](n+1) + ADP + H(+). It participates in glycan biosynthesis; glycogen biosynthesis. Its function is as follows. Synthesizes alpha-1,4-glucan chains using ADP-glucose. The sequence is that of Glycogen synthase from Geotalea daltonii (strain DSM 22248 / JCM 15807 / FRC-32) (Geobacter daltonii).